Reading from the N-terminus, the 155-residue chain is Ribosomal RNA large subunit methyltransferase H (155 aa).

Residues Leu-72, Gly-103, and 122 to 127 (LSDLTL) each bind S-adenosyl-L-methionine.

It belongs to the RNA methyltransferase RlmH family. In terms of assembly, homodimer.

It is found in the cytoplasm. The enzyme catalyses pseudouridine(1915) in 23S rRNA + S-adenosyl-L-methionine = N(3)-methylpseudouridine(1915) in 23S rRNA + S-adenosyl-L-homocysteine + H(+). Specifically methylates the pseudouridine at position 1915 (m3Psi1915) in 23S rRNA. The polypeptide is Ribosomal RNA large subunit methyltransferase H (Polaromonas naphthalenivorans (strain CJ2)).